Reading from the N-terminus, the 144-residue chain is Small ribosomal subunit protein bS6 (144 aa).

A disordered region spans residues 97 to 144; that stretch reads DTEQSLIMKSKDEKGDKPERSERRRRDDEEVDAAPAATDTDGDNAEAA. Residues 105–124 show a composition bias toward basic and acidic residues; it reads KSKDEKGDKPERSERRRRDD.

It belongs to the bacterial ribosomal protein bS6 family.

In terms of biological role, binds together with bS18 to 16S ribosomal RNA. In Xanthomonas campestris pv. campestris (strain B100), this protein is Small ribosomal subunit protein bS6.